The following is a 151-amino-acid chain: Probable cGMP 3',5'-cyclic phosphodiesterase subunit delta (151 aa).

Belongs to the PDE6D/unc-119 family. As to quaternary structure, interacts with Pde6.

Its subcellular location is the nucleus. The protein resides in the cytoplasm. The sequence is that of Probable cGMP 3',5'-cyclic phosphodiesterase subunit delta from Anopheles gambiae (African malaria mosquito).